A 143-amino-acid chain; its full sequence is Periplasmic nitrate reductase, electron transfer subunit (143 aa).

The first 22 residues, 1 to 22, serve as a signal peptide directing secretion; sequence MKKILTLAAIVLAIGGCSGQQA. Heme c is bound by residues H72, C85, C88, H89, H106, C121, C124, and H125.

This sequence belongs to the NapB family. As to quaternary structure, component of the periplasmic nitrate reductase NapAB complex composed of NapA and NapB. Binds 2 heme C groups per subunit.

It is found in the periplasm. Functionally, electron transfer subunit of the periplasmic nitrate reductase complex NapAB. Receives electrons from the membrane-anchored tetraheme c-type CymA protein and transfers these to NapA subunit, thus allowing electron flow between membrane and periplasm. Not essential for nitrate reduction but confers advantage to the organism when grown on nitrate and thereby a fitness gain in utilizing nitrate. The sequence is that of Periplasmic nitrate reductase, electron transfer subunit from Shewanella oneidensis (strain ATCC 700550 / JCM 31522 / CIP 106686 / LMG 19005 / NCIMB 14063 / MR-1).